We begin with the raw amino-acid sequence, 120 residues long: UPF0231 protein YE0706 (120 aa).

It belongs to the UPF0231 family.

This Yersinia enterocolitica serotype O:8 / biotype 1B (strain NCTC 13174 / 8081) protein is UPF0231 protein YE0706.